The chain runs to 156 residues: Small ribosomal subunit protein uS7 (156 aa).

It belongs to the universal ribosomal protein uS7 family. Part of the 30S ribosomal subunit. Contacts proteins S9 and S11.

Its function is as follows. One of the primary rRNA binding proteins, it binds directly to 16S rRNA where it nucleates assembly of the head domain of the 30S subunit. Is located at the subunit interface close to the decoding center, probably blocks exit of the E-site tRNA. The polypeptide is Small ribosomal subunit protein uS7 (Buchnera aphidicola subsp. Baizongia pistaciae (strain Bp)).